The chain runs to 427 residues: Male abnormal protein mab-31 (427 aa).

The tract at residues 68 to 102 (PIGTGRFPNPSPPRSSSGTNTPIRKTPGSRPDRGK) is disordered.

The protein resides in the nucleus. In terms of biological role, putative transcription factor. Acts in a TGF-beta-like pathway during development of male-specific genital sensilla (simple sense organs), known as rays. Involved in production of reactive oxygen species (ROS), acting downstream of the TGF-beta-like dbl-1 signaling pathway. Involved in locomotory behavior. This is Male abnormal protein mab-31 from Caenorhabditis elegans.